The chain runs to 276 residues: Secreted RxLR effector protein 120 (276 aa).

The N-terminal stretch at 1-21 (MRGAYYVITALLVVASSQTSA) is a signal peptide. Positions 48 to 65 (QSLRGSRDVPDDLAHEER) match the RxLR-dEER motif. The segment at 97–130 (GKRPRVAEKDALEKASGADEASKKPRNTATDDAF) is disordered. The segment covering 101-119 (RVAEKDALEKASGADEASK) has biased composition (basic and acidic residues).

The protein belongs to the RxLR effector family.

It is found in the secreted. The protein resides in the host nucleus. Its function is as follows. Secreted effector that completely suppresses the host cell death induced by cell death-inducing proteins. This Plasmopara viticola (Downy mildew of grapevine) protein is Secreted RxLR effector protein 120.